The chain runs to 151 residues: Protein SprT-like (151 aa).

Positions 6–148 constitute a SprT-like domain; that stretch reads LQALVERISL…FCRGKLKKIK (143 aa). H67 lines the Zn(2+) pocket. E68 is an active-site residue. A Zn(2+)-binding site is contributed by H71.

This sequence belongs to the SprT family. The cofactor is Zn(2+).

The protein resides in the cytoplasm. This Anoxybacillus flavithermus (strain DSM 21510 / WK1) protein is Protein SprT-like.